A 157-amino-acid polypeptide reads, in one-letter code: Crossover junction endodeoxyribonuclease RuvC (157 aa).

Active-site residues include Asp7, Glu70, and Asp142. Mg(2+)-binding residues include Asp7, Glu70, and Asp142.

Belongs to the RuvC family. Homodimer which binds Holliday junction (HJ) DNA. The HJ becomes 2-fold symmetrical on binding to RuvC with unstacked arms; it has a different conformation from HJ DNA in complex with RuvA. In the full resolvosome a probable DNA-RuvA(4)-RuvB(12)-RuvC(2) complex forms which resolves the HJ. Mg(2+) is required as a cofactor.

The protein localises to the cytoplasm. The enzyme catalyses Endonucleolytic cleavage at a junction such as a reciprocal single-stranded crossover between two homologous DNA duplexes (Holliday junction).. The RuvA-RuvB-RuvC complex processes Holliday junction (HJ) DNA during genetic recombination and DNA repair. Endonuclease that resolves HJ intermediates. Cleaves cruciform DNA by making single-stranded nicks across the HJ at symmetrical positions within the homologous arms, yielding a 5'-phosphate and a 3'-hydroxyl group; requires a central core of homology in the junction. The consensus cleavage sequence is 5'-(A/T)TT(C/G)-3'. Cleavage occurs on the 3'-side of the TT dinucleotide at the point of strand exchange. HJ branch migration catalyzed by RuvA-RuvB allows RuvC to scan DNA until it finds its consensus sequence, where it cleaves and resolves the cruciform DNA. The sequence is that of Crossover junction endodeoxyribonuclease RuvC from Synechococcus sp. (strain RCC307).